Consider the following 198-residue polypeptide: Peptidyl-tRNA hydrolase (198 aa).

Y14 is a tRNA binding site. Residue H19 is the Proton acceptor of the active site. Residues Y64, N66, and N112 each contribute to the tRNA site.

It belongs to the PTH family. As to quaternary structure, monomer.

The protein resides in the cytoplasm. The catalysed reaction is an N-acyl-L-alpha-aminoacyl-tRNA + H2O = an N-acyl-L-amino acid + a tRNA + H(+). Its function is as follows. Hydrolyzes ribosome-free peptidyl-tRNAs (with 1 or more amino acids incorporated), which drop off the ribosome during protein synthesis, or as a result of ribosome stalling. Catalyzes the release of premature peptidyl moieties from peptidyl-tRNA molecules trapped in stalled 50S ribosomal subunits, and thus maintains levels of free tRNAs and 50S ribosomes. The polypeptide is Peptidyl-tRNA hydrolase (Beijerinckia indica subsp. indica (strain ATCC 9039 / DSM 1715 / NCIMB 8712)).